Reading from the N-terminus, the 803-residue chain is Zinc finger protein 226 (803 aa).

Positions 8 to 78 (VTFKDVAVAF…TTATRRQGNL (71 aa)) constitute a KRAB domain. The segment at 252–274 (YQCNECKKPFSDLSSFDLHQQLQ) adopts a C2H2-type 1; degenerate zinc-finger fold. The C2H2-type 2; degenerate zinc-finger motif lies at 280 to 302 (LTCVERGKGFCYSPVLPVHQKVH). 17 consecutive C2H2-type zinc fingers follow at residues 307–329 (LKCD…QKVH), 335–357 (YKCK…CKVH), 363–385 (YNCE…QRLH), 391–413 (FKCD…QRVH), 419–441 (YKCE…QRVH), 447–469 (YKCE…QGVH), 475–497 (YICT…QRVH), 503–525 (YKCN…LVVH), 531–553 (YKCE…QKAH), 559–581 (FKCE…QLIH), 587–609 (YKCE…CRIH), 615–637 (YNCE…QRVH), 643–665 (FKCE…QKVH), 671–693 (YKCD…QRVH), 699–721 (YKCG…QSVH), 727–749 (YKCD…QRVH), and 755–777 (YKCE…HRIH). The tract at residues 781-803 (KSYKSNRGGKNIRESTQEKKSIK) is disordered. Residues 791-803 (NIRESTQEKKSIK) show a composition bias toward basic and acidic residues.

This sequence belongs to the krueppel C2H2-type zinc-finger protein family.

Its subcellular location is the nucleus. In terms of biological role, may be involved in transcriptional regulation. This Homo sapiens (Human) protein is Zinc finger protein 226 (ZNF226).